The chain runs to 501 residues: Glutamyl-tRNA(Gln) amidotransferase subunit A (501 aa).

Residues Lys80 and Ser155 each act as charge relay system in the active site. Residue Ser179 is the Acyl-ester intermediate of the active site.

Belongs to the amidase family. GatA subfamily. Heterotrimer of A, B and C subunits.

It carries out the reaction L-glutamyl-tRNA(Gln) + L-glutamine + ATP + H2O = L-glutaminyl-tRNA(Gln) + L-glutamate + ADP + phosphate + H(+). Allows the formation of correctly charged Gln-tRNA(Gln) through the transamidation of misacylated Glu-tRNA(Gln) in organisms which lack glutaminyl-tRNA synthetase. The reaction takes place in the presence of glutamine and ATP through an activated gamma-phospho-Glu-tRNA(Gln). The polypeptide is Glutamyl-tRNA(Gln) amidotransferase subunit A (Cutibacterium acnes (strain DSM 16379 / KPA171202) (Propionibacterium acnes)).